The primary structure comprises 855 residues: Cell surface glycoprotein (855 aa).

The N-terminal stretch at 1–22 is a signal peptide; it reads MTANKQVRAVLLAALMVFSVFA. 19 N-linked (GlcNAc...) asparagine glycosylation sites follow: asparagine 78, asparagine 83, asparagine 108, asparagine 167, asparagine 174, asparagine 187, asparagine 203, asparagine 227, asparagine 230, asparagine 313, asparagine 363, asparagine 441, asparagine 548, asparagine 588, asparagine 608, asparagine 620, asparagine 642, asparagine 656, and asparagine 754. The segment covering 782-802 has biased composition (low complexity); the sequence is ETTTAAETTTTEESTETTTTE. The interval 782 to 831 is disordered; it reads ETTTAAETTTTEESTETTTTEESTEEPTETATATEEPTEEATEETTESST. The span at 817 to 827 shows a compositional bias: acidic residues; sequence EPTEEATEETT. A helical membrane pass occupies residues 831 to 851; sequence TPGFGVVVALVALVAAALLAV. A PGF sorting signal motif is present at residues 832–834; the sequence is PGF.

This sequence belongs to the halobacterial S-layer protein family. In terms of processing, glycosylated. Cleaved by the archaeosortase ArtA at the C-terminus, with removal of a short hydrophobic segment. Post-translationally, lipidation.

It is found in the secreted. The protein localises to the cell wall. It localises to the S-layer. Its subcellular location is the cell membrane. Its function is as follows. S-layer protein. The S-layer is a paracrystalline mono-layered assembly of proteins which coats the surface of the cell. In Haloferax gibbonsii, this protein is Cell surface glycoprotein.